Consider the following 155-residue polypeptide: Deoxyuridine 5'-triphosphate nucleotidohydrolase (155 aa).

Substrate-binding positions include 74–76 (RSG), asparagine 87, and 91–93 (LID).

It belongs to the dUTPase family. Mg(2+) serves as cofactor.

It catalyses the reaction dUTP + H2O = dUMP + diphosphate + H(+). Its pathway is pyrimidine metabolism; dUMP biosynthesis; dUMP from dCTP (dUTP route): step 2/2. Its function is as follows. This enzyme is involved in nucleotide metabolism: it produces dUMP, the immediate precursor of thymidine nucleotides and it decreases the intracellular concentration of dUTP so that uracil cannot be incorporated into DNA. The sequence is that of Deoxyuridine 5'-triphosphate nucleotidohydrolase from Xanthomonas oryzae pv. oryzae (strain MAFF 311018).